The primary structure comprises 353 residues: Cyclin-dependent kinase-like 1 (353 aa).

Positions 4–286 (YDRLSKLGEG…CSELMLHGIF (283 aa)) constitute a Protein kinase domain. Residues 10 to 18 (LGEGSYGVV) and lysine 33 contribute to the ATP site. Catalysis depends on aspartate 126, which acts as the Proton acceptor. The segment at 331–353 (GGNHGNNNNNGNGINRNFLPTIS) is disordered. Positions 335–347 (GNNNNNGNGINRN) are enriched in low complexity.

Belongs to the protein kinase superfamily. Ser/Thr protein kinase family. Specifically expressed in head and tail ciliated sensory neurons.

The protein localises to the cell projection. Its subcellular location is the cilium. It catalyses the reaction L-seryl-[protein] + ATP = O-phospho-L-seryl-[protein] + ADP + H(+). The enzyme catalyses L-threonyl-[protein] + ATP = O-phospho-L-threonyl-[protein] + ADP + H(+). Its function is as follows. Modulates cilium assembly. The polypeptide is Cyclin-dependent kinase-like 1 (Caenorhabditis elegans).